A 115-amino-acid chain; its full sequence is MMSASTMAKVMILMLAVCLLTQADGKPVKKRAVSEIQLMHNLGKHLASVERMQWLRKKLQDVHNFVSLGVQMAAREGSYQRPTKKEENVLVDGNSKSLGEGDKADVDVLVKAKSQ.

The signal sequence occupies residues 1–25 (MMSASTMAKVMILMLAVCLLTQADG). Positions 26-31 (KPVKKR) are excised as a propeptide. The interval 51-69 (RMQWLRKKLQDVHNFVSLG) is important for receptor binding. The segment at 76-101 (EGSYQRPTKKEENVLVDGNSKSLGEG) is disordered.

Belongs to the parathyroid hormone family. In terms of assembly, interacts with PTH1R (via N-terminal extracellular domain). In terms of tissue distribution, hypothalamus and parathyroid gland.

It is found in the secreted. Parathyroid hormone elevates calcium level by dissolving the salts in bone and preventing their renal excretion. Acts by binding to its receptor, PTH1R, activating G protein-coupled receptor signaling. Stimulates [1-14C]-2-deoxy-D-glucose (2DG) transport and glycogen synthesis in osteoblastic cells. The protein is Parathyroid hormone (Pth) of Rattus norvegicus (Rat).